A 268-amino-acid chain; its full sequence is 4-hydroxy-tetrahydrodipicolinate reductase (268 aa).

NAD(+) is bound by residues 9 to 14 (GVCGRM), Glu35, 99 to 101 (GTT), and 123 to 126 (APNY). His156 acts as the Proton donor/acceptor in catalysis. His157 is a binding site for (S)-2,3,4,5-tetrahydrodipicolinate. The active-site Proton donor is the Lys160. Residue 166-167 (GT) coordinates (S)-2,3,4,5-tetrahydrodipicolinate.

This sequence belongs to the DapB family.

The protein resides in the cytoplasm. It carries out the reaction (S)-2,3,4,5-tetrahydrodipicolinate + NAD(+) + H2O = (2S,4S)-4-hydroxy-2,3,4,5-tetrahydrodipicolinate + NADH + H(+). The enzyme catalyses (S)-2,3,4,5-tetrahydrodipicolinate + NADP(+) + H2O = (2S,4S)-4-hydroxy-2,3,4,5-tetrahydrodipicolinate + NADPH + H(+). It participates in amino-acid biosynthesis; L-lysine biosynthesis via DAP pathway; (S)-tetrahydrodipicolinate from L-aspartate: step 4/4. In terms of biological role, catalyzes the conversion of 4-hydroxy-tetrahydrodipicolinate (HTPA) to tetrahydrodipicolinate. The chain is 4-hydroxy-tetrahydrodipicolinate reductase from Magnetococcus marinus (strain ATCC BAA-1437 / JCM 17883 / MC-1).